Here is a 189-residue protein sequence, read N- to C-terminus: Fucolectin-5 (189 aa).

A signal peptide spans 1–31 (MKTCNLTDRMKVKMIMLLFQILAISTLQSDS). Residues 40 to 189 (QENVAVRGKA…VEVNALLPAN (150 aa)) form an F5/8 type C-like region. Ca(2+) is bound by residues Asp-70, Asn-72, and Ser-81. 3 cysteine pairs are disulfide-bonded: Cys-82–Cys-178, Cys-114–Cys-115, and Cys-140–Cys-156. Positions 84 and 111 each coordinate alpha-L-fucose. A Cell attachment site motif is present at residues 111–113 (RGD). Arg-118 contacts alpha-L-fucose. Residues Cys-178 and Glu-179 each contribute to the Ca(2+) site.

The protein belongs to the fucolectin family. As to quaternary structure, homotrimer. In terms of tissue distribution, gill mucous cells.

The protein resides in the secreted. Its function is as follows. Acts as a defensive agent. Recognizes blood group fucosylated oligosaccharides including A, B, H and Lewis B-type antigens. Does not recognize Lewis A antigen and has low affinity for monovalent haptens. This chain is Fucolectin-5, found in Anguilla japonica (Japanese eel).